The following is a 362-amino-acid chain: Formate dehydrogenase (362 aa).

Residues Val93 and Asn119 each contribute to the substrate site. NAD(+) is bound by residues 174 to 175, Asp195, 230 to 234, Thr256, Asp282, 311 to 314, and Ser357; these read RI, PLHAG, and HYSG.

This sequence belongs to the D-isomer specific 2-hydroxyacid dehydrogenase family. FDH subfamily. As to quaternary structure, homodimer.

The protein localises to the cytoplasm. It catalyses the reaction formate + NAD(+) = CO2 + NADH. In terms of biological role, catalyzes the NAD(+)-dependent oxidation of formate to carbon dioxide. Formate oxidation is the final step in the methanol oxidation pathway in methylotrophic microorganisms. Has a role in the detoxification of exogenous formate in non-methylotrophic organisms. The protein is Formate dehydrogenase of Pichia angusta (Yeast).